The primary structure comprises 270 residues: 3-phenylpropionate-dihydrodiol/cinnamic acid-dihydrodiol dehydrogenase (270 aa).

An NAD(+)-binding site is contributed by 10–34 (FITGGGSGLGLALVERFIEEGAQVA). Residue S143 coordinates substrate. The active-site Proton acceptor is the Y156.

Belongs to the short-chain dehydrogenases/reductases (SDR) family.

It carries out the reaction 3-(cis-5,6-dihydroxycyclohexa-1,3-dien-1-yl)propanoate + NAD(+) = 3-(2,3-dihydroxyphenyl)propanoate + NADH + H(+). The enzyme catalyses (2E)-3-(cis-5,6-dihydroxycyclohexa-1,3-dien-1-yl)prop-2-enoate + NAD(+) = (2E)-3-(2,3-dihydroxyphenyl)prop-2-enoate + NADH + H(+). The protein operates within aromatic compound metabolism; 3-phenylpropanoate degradation. In terms of biological role, converts 3-phenylpropionate-dihydrodiol (PP-dihydrodiol) and cinnamic acid-dihydrodiol (CI-dihydrodiol) into 3-(2,3-dihydroxylphenyl)propanoic acid (DHPP) and 2,3-dihydroxicinnamic acid (DHCI), respectively. The chain is 3-phenylpropionate-dihydrodiol/cinnamic acid-dihydrodiol dehydrogenase from Shigella sonnei (strain Ss046).